The chain runs to 418 residues: F-box protein At5g03970 (418 aa).

Positions 18-66 (STHEVLNSNDTMCEILILLPPETIYKLILVSKRWLEIIASPCFRHTYLA) constitute an F-box domain.

The chain is F-box protein At5g03970 from Arabidopsis thaliana (Mouse-ear cress).